We begin with the raw amino-acid sequence, 231 residues long: tRNA (guanine-N(1)-)-methyltransferase (231 aa).

Residues Gly112 and 132 to 137 contribute to the S-adenosyl-L-methionine site; that span reads LGDFVL.

It belongs to the RNA methyltransferase TrmD family. In terms of assembly, homodimer.

It is found in the cytoplasm. It catalyses the reaction guanosine(37) in tRNA + S-adenosyl-L-methionine = N(1)-methylguanosine(37) in tRNA + S-adenosyl-L-homocysteine + H(+). Its function is as follows. Specifically methylates guanosine-37 in various tRNAs. The protein is tRNA (guanine-N(1)-)-methyltransferase of Microcystis aeruginosa (strain NIES-843 / IAM M-2473).